Consider the following 938-residue polypeptide: AP-2 complex subunit alpha-2 (938 aa).

A 1,2-diacyl-sn-glycero-3-phospho-(1D-myo-inositol-3,4,5-trisphosphate)-binding positions include R11–G12, K43, Y53, and K57–K61. The disordered stretch occupies residues L615–G681. Residues P646–V667 show a composition bias toward low complexity. Residues P668–S677 are compositionally biased toward pro residues.

This sequence belongs to the adaptor complexes large subunit family. Adaptor protein complex 2 (AP-2) is a heterotetramer composed of two large adaptins (alpha-type subunit AP2A1 or AP2A2 and beta-type subunit AP2B1), a medium adaptin (mu-type subunit AP2M1) and a small adaptin (sigma-type subunit AP2S1). Interacts with clathrin. Binds EPN1, EPS15, AMPH, SNAP91 and BIN1. Interacts with HIP1. Interacts with DGKD. Interacts with DENND1A, DENND1B and DENND1C. Interacts with FCHO1 and DAB2. Interacts with ATAT1; this interaction is required for efficient alpha-tubulin acetylation by ATAT1. Interacts with KIAA1107. Together with AP2B1 and AP2M1, it interacts with ADAM10; this interaction facilitates ADAM10 endocytosis from the plasma membrane during long-term potentiation in hippocampal neurons. Interacts with CLN3 (via dileucine motif). Interacts with ABCB11; this interaction regulates cell membrane expression of ABCB11 through its internalization in a clathrin-dependent manner and its subsequent degradation. Interacts with Cacfd1. Interacts with DNAJC6. In terms of tissue distribution, widely expressed.

It localises to the cell membrane. Its subcellular location is the membrane. It is found in the coated pit. Functionally, component of the adaptor protein complex 2 (AP-2). Adaptor protein complexes function in protein transport via transport vesicles in different membrane traffic pathways. Adaptor protein complexes are vesicle coat components and appear to be involved in cargo selection and vesicle formation. AP-2 is involved in clathrin-dependent endocytosis in which cargo proteins are incorporated into vesicles surrounded by clathrin (clathrin-coated vesicles, CCVs) which are destined for fusion with the early endosome. The clathrin lattice serves as a mechanical scaffold but is itself unable to bind directly to membrane components. Clathrin-associated adaptor protein (AP) complexes which can bind directly to both the clathrin lattice and to the lipid and protein components of membranes are considered to be the major clathrin adaptors contributing the CCV formation. AP-2 also serves as a cargo receptor to selectively sort the membrane proteins involved in receptor-mediated endocytosis. AP-2 seems to play a role in the recycling of synaptic vesicle membranes from the presynaptic surface. AP-2 recognizes Y-X-X-[FILMV] (Y-X-X-Phi) and [ED]-X-X-X-L-[LI] endocytosis signal motifs within the cytosolic tails of transmembrane cargo molecules. AP-2 may also play a role in maintaining normal post-endocytic trafficking through the ARF6-regulated, non-clathrin pathway. During long-term potentiation in hippocampal neurons, AP-2 is responsible for the endocytosis of ADAM10. The AP-2 alpha subunit binds polyphosphoinositide-containing lipids, positioning AP-2 on the membrane. The AP-2 alpha subunit acts via its C-terminal appendage domain as a scaffolding platform for endocytic accessory proteins. The AP-2 alpha and AP-2 sigma subunits are thought to contribute to the recognition of the [ED]-X-X-X-L-[LI] motif. This chain is AP-2 complex subunit alpha-2, found in Rattus norvegicus (Rat).